We begin with the raw amino-acid sequence, 100 residues long: Urease subunit gamma (100 aa).

This sequence belongs to the urease gamma subunit family. As to quaternary structure, heterotrimer of UreA (gamma), UreB (beta) and UreC (alpha) subunits. Three heterotrimers associate to form the active enzyme.

Its subcellular location is the cytoplasm. The enzyme catalyses urea + 2 H2O + H(+) = hydrogencarbonate + 2 NH4(+). The protein operates within nitrogen metabolism; urea degradation; CO(2) and NH(3) from urea (urease route): step 1/1. This is Urease subunit gamma from Nocardia farcinica (strain IFM 10152).